The following is a 274-amino-acid chain: Acyl-[acyl-carrier-protein]--UDP-N-acetylglucosamine O-acyltransferase (274 aa).

Belongs to the transferase hexapeptide repeat family. LpxA subfamily. In terms of assembly, homotrimer.

The protein localises to the cytoplasm. The catalysed reaction is a (3R)-hydroxyacyl-[ACP] + UDP-N-acetyl-alpha-D-glucosamine = a UDP-3-O-[(3R)-3-hydroxyacyl]-N-acetyl-alpha-D-glucosamine + holo-[ACP]. It functions in the pathway glycolipid biosynthesis; lipid IV(A) biosynthesis; lipid IV(A) from (3R)-3-hydroxytetradecanoyl-[acyl-carrier-protein] and UDP-N-acetyl-alpha-D-glucosamine: step 1/6. In terms of biological role, involved in the biosynthesis of lipid A, a phosphorylated glycolipid that anchors the lipopolysaccharide to the outer membrane of the cell. This chain is Acyl-[acyl-carrier-protein]--UDP-N-acetylglucosamine O-acyltransferase, found in Bartonella bacilliformis (strain ATCC 35685 / KC583 / Herrer 020/F12,63).